Consider the following 747-residue polypeptide: Putative T-box protein 31 (747 aa).

The T-box DNA-binding region spans 33–199; the sequence is QMLTKRKKTN…AGPAAKKTPD (167 aa). 2 disordered regions span residues 268–289 and 332–364; these read SLSS…DFDD and SINN…VRDK. Positions 332–358 are enriched in polar residues; it reads SINNPGYLSTASSPAALNQDSSASEKS.

It localises to the nucleus. This is Putative T-box protein 31 (tbx-31) from Caenorhabditis elegans.